A 531-amino-acid polypeptide reads, in one-letter code: MASSPVAPVVLVILDGWGYREETYGNAIASAYTPVIDSLWQAYPHTLIHTSGKAVGLPKGQMGNSEVGHLNIGAGRIVPQELVRISDAVEEGSLFSNPVLVRLCQTVKERNGKLHFIGLCSAGGVHSHIDHLYGLVELAKRHGLPACIHVITDGRDTPPRDAAGVLEELEQRLKTSGCGRIVTVSGRYYAMDRDRRWERTEAAYRVMTSNEHIQPLRAVDVARQSYAQDIGDEFIVPTRIAAGAVEPGDGVVFFNFRPDRARQLTQAFIDPNFSGFERALITPLDFVTFTQYDASFNCGVAFPPQNLSHILGEVIAEHGLKQLRAAETEKYAHVTYFFNGGLEEPFPGEDRILIPSPMVTTYDQAPAMSALAVTQAVKKAIEKQEYALVVVNFANSDMVGHTGKLAATIQAIETVDRCVGVLVEAATKVGGTLLITADHGNAEYMIDEDGNPWTAHTTNPVPFILVEGEKRKVPGHGGHVILRKDGCLADIAPTILEILELPQPLEMTGRSLIVSAPYEMRLNRTPVSLKI.

Mn(2+)-binding residues include D15 and S65. Residue S65 is the Phosphoserine intermediate of the active site. Residues H126, 155–156 (RD), R187, R193, 257–260 (RPDR), and K330 each bind substrate. Mn(2+) is bound by residues D397, H401, D438, H439, and H456.

It belongs to the BPG-independent phosphoglycerate mutase family. In terms of assembly, monomer. It depends on Mn(2+) as a cofactor.

It carries out the reaction (2R)-2-phosphoglycerate = (2R)-3-phosphoglycerate. It participates in carbohydrate degradation; glycolysis; pyruvate from D-glyceraldehyde 3-phosphate: step 3/5. Its function is as follows. Catalyzes the interconversion of 2-phosphoglycerate and 3-phosphoglycerate. The sequence is that of 2,3-bisphosphoglycerate-independent phosphoglycerate mutase from Thermosynechococcus vestitus (strain NIES-2133 / IAM M-273 / BP-1).